Consider the following 497-residue polypeptide: Serine/arginine-rich protein PSR (497 aa).

The N-terminal stretch at 1-19 (MYSRCIALVFVGLLASSLA) is a signal peptide. Residues 20–366 (ANCYGPAGKL…HHGLSSQKLG (347 aa)) are Extracellular-facing. N-linked (GlcNAc...) asparagine glycans are attached at residues Asn-92, Asn-193, Asn-202, Asn-261, and Asn-283. A helical membrane pass occupies residues 367-387 (LAIGLPIAGVFLIILIAAAII). Residues 388–497 (YYRKRRESEK…ESASRDSDSD (110 aa)) are Cytoplasmic-facing. The interval 424 to 450 (MGSKTMQAMLDMRDDDESEHDSDDGYG) is necessary for phosphorylation by PSRPK in vitro. Over residues 436-447 (RDDDESEHDSDD) the composition is skewed to acidic residues. The disordered stretch occupies residues 436 to 497 (RDDDESEHDS…ESASRDSDSD (62 aa)). Residues 459–471 (GRSRSRSRSRSVS) are compositionally biased toward basic residues. Basic and acidic residues predominate over residues 476 to 497 (GSRDARSESDPGESASRDSDSD).

In terms of processing, phosphorylated on serine residues in the RS domain by PSRPK.

Its subcellular location is the membrane. The sequence is that of Serine/arginine-rich protein PSR from Physarum polycephalum (Slime mold).